The sequence spans 419 residues: UDP-N-acetylmuramoylalanine--D-glutamate ligase (419 aa).

109–115 (GSTGKTT) contacts ATP.

Belongs to the MurCDEF family.

The protein localises to the cytoplasm. It catalyses the reaction UDP-N-acetyl-alpha-D-muramoyl-L-alanine + D-glutamate + ATP = UDP-N-acetyl-alpha-D-muramoyl-L-alanyl-D-glutamate + ADP + phosphate + H(+). It functions in the pathway cell wall biogenesis; peptidoglycan biosynthesis. Its function is as follows. Cell wall formation. Catalyzes the addition of glutamate to the nucleotide precursor UDP-N-acetylmuramoyl-L-alanine (UMA). This Chlamydia felis (strain Fe/C-56) (Chlamydophila felis) protein is UDP-N-acetylmuramoylalanine--D-glutamate ligase.